The following is a 667-amino-acid chain: DNA ligase (667 aa).

NAD(+)-binding positions include 32 to 36, 81 to 82, and Glu-110; these read DSEYD and SL. The N6-AMP-lysine intermediate role is filled by Lys-112. NAD(+)-binding residues include Arg-133, Glu-167, Lys-283, and Lys-307. 4 residues coordinate Zn(2+): Cys-401, Cys-404, Cys-419, and Cys-424. Positions 586 to 667 constitute a BRCT domain; it reads EGHPEFSGKT…FVDKQNELNS (82 aa).

The protein belongs to the NAD-dependent DNA ligase family. LigA subfamily. Requires Mg(2+) as cofactor. The cofactor is Mn(2+).

It catalyses the reaction NAD(+) + (deoxyribonucleotide)n-3'-hydroxyl + 5'-phospho-(deoxyribonucleotide)m = (deoxyribonucleotide)n+m + AMP + beta-nicotinamide D-nucleotide.. Functionally, DNA ligase that catalyzes the formation of phosphodiester linkages between 5'-phosphoryl and 3'-hydroxyl groups in double-stranded DNA using NAD as a coenzyme and as the energy source for the reaction. It is essential for DNA replication and repair of damaged DNA. This chain is DNA ligase, found in Staphylococcus aureus (strain Mu3 / ATCC 700698).